Here is a 270-residue protein sequence, read N- to C-terminus: tRNA pseudouridine synthase A (270 aa).

D51 (nucleophile) is an active-site residue. Y109 is a binding site for substrate.

It belongs to the tRNA pseudouridine synthase TruA family. Homodimer.

It carries out the reaction uridine(38/39/40) in tRNA = pseudouridine(38/39/40) in tRNA. Functionally, formation of pseudouridine at positions 38, 39 and 40 in the anticodon stem and loop of transfer RNAs. The polypeptide is tRNA pseudouridine synthase A (Burkholderia multivorans (strain ATCC 17616 / 249)).